The primary structure comprises 228 residues: Probable septum site-determining protein MinC (228 aa).

The protein belongs to the MinC family. In terms of assembly, interacts with MinD and FtsZ.

Functionally, cell division inhibitor that blocks the formation of polar Z ring septums. Rapidly oscillates between the poles of the cell to destabilize FtsZ filaments that have formed before they mature into polar Z rings. Prevents FtsZ polymerization. This Bacillus mycoides (strain KBAB4) (Bacillus weihenstephanensis) protein is Probable septum site-determining protein MinC.